A 165-amino-acid chain; its full sequence is Lipoprotein signal peptidase (165 aa).

3 helical membrane passes run 6 to 26, 68 to 88, and 95 to 115; these read SSVE…LLII, GKID…LFYF, and ISFL…GNMI. Residues Asp-125 and Asp-141 contribute to the active site. A helical transmembrane segment spans residues 132 to 152; that stretch reads IWSFIFNFADVWINIGVVLII.

The protein belongs to the peptidase A8 family.

The protein localises to the cell inner membrane. The enzyme catalyses Release of signal peptides from bacterial membrane prolipoproteins. Hydrolyzes -Xaa-Yaa-Zaa-|-(S,diacylglyceryl)Cys-, in which Xaa is hydrophobic (preferably Leu), and Yaa (Ala or Ser) and Zaa (Gly or Ala) have small, neutral side chains.. It participates in protein modification; lipoprotein biosynthesis (signal peptide cleavage). Its function is as follows. This protein specifically catalyzes the removal of signal peptides from prolipoproteins. The polypeptide is Lipoprotein signal peptidase (Fusobacterium nucleatum subsp. nucleatum (strain ATCC 25586 / DSM 15643 / BCRC 10681 / CIP 101130 / JCM 8532 / KCTC 2640 / LMG 13131 / VPI 4355)).